A 494-amino-acid chain; its full sequence is UPF0371 protein SP70585_0405 (494 aa).

This sequence belongs to the UPF0371 family.

In Streptococcus pneumoniae (strain 70585), this protein is UPF0371 protein SP70585_0405.